The following is a 265-amino-acid chain: Ubiquinone biosynthesis protein COQ4 homolog, mitochondrial (265 aa).

A mitochondrion-targeting transit peptide spans 1 to 30 (MMQRSWQSWRRGLTLGLASRRSYVASVEAP). 4 residues coordinate Zn(2+): H170, D171, H174, and E186.

The protein belongs to the COQ4 family. Component of a multi-subunit COQ enzyme complex. Zn(2+) serves as cofactor.

It localises to the mitochondrion inner membrane. It carries out the reaction a 4-hydroxy-3-methoxy-5-(all-trans-polyprenyl)benzoate + H(+) = a 2-methoxy-6-(all-trans-polyprenyl)phenol + CO2. Its pathway is cofactor biosynthesis; ubiquinone biosynthesis. Lyase that catalyzes the C1-decarboxylation of 4-hydroxy-3-methoxy-5-(all-trans-polyprenyl)benzoic acid into 2-methoxy-6-(all-trans-polyprenyl)phenol during ubiquinone biosynthesis. This is Ubiquinone biosynthesis protein COQ4 homolog, mitochondrial from Drosophila virilis (Fruit fly).